The chain runs to 204 residues: MLELLCRVSPARLPWRSCMSLAIQPAQRRRFATEAAGKRTETEKSAFTEWRTVYSMPGIRLVAALSRLKVYQAVITAAGTPIVFALGSAGQLSTDALAIYAAIGVTGLITLTLASYASSNLVGFIYVNEEQDLLKLAYVDFWGRRQETLIETEDLLPSWEQGSPSRLRFVSPICLRSDSKRRYKLLNRFGHVSDRQLFEGLFGN.

Over 1–69 the chain is Mitochondrial matrix; it reads MLELLCRVSP…RLVAALSRLK (69 aa). The helical transmembrane segment at 70–90 threads the bilayer; the sequence is VYQAVITAAGTPIVFALGSAG. Topologically, residues 91–95 are mitochondrial intermembrane; the sequence is QLSTD. A helical membrane pass occupies residues 96–116; that stretch reads ALAIYAAIGVTGLITLTLASY. Topologically, residues 117–204 are mitochondrial matrix; it reads ASSNLVGFIY…RQLFEGLFGN (88 aa).

Belongs to the TMEM186 family. In terms of assembly, associates with mitochondrial complex I assembly intermediates during its biogenesis.

The protein localises to the mitochondrion inner membrane. As part of the MCIA complex, required for efficient assembly of the mitochondrial complex I. The chain is Transmembrane protein 186 from Drosophila melanogaster (Fruit fly).